Consider the following 335-residue polypeptide: Nucleoid-associated protein KPK_1538 (335 aa).

This sequence belongs to the YejK family.

The protein localises to the cytoplasm. It is found in the nucleoid. The sequence is that of Nucleoid-associated protein KPK_1538 from Klebsiella pneumoniae (strain 342).